Here is a 340-residue protein sequence, read N- to C-terminus: Phosphoribosylformylglycinamidine cyclo-ligase (340 aa).

It belongs to the AIR synthase family.

It is found in the cytoplasm. It catalyses the reaction 2-formamido-N(1)-(5-O-phospho-beta-D-ribosyl)acetamidine + ATP = 5-amino-1-(5-phospho-beta-D-ribosyl)imidazole + ADP + phosphate + H(+). It participates in purine metabolism; IMP biosynthesis via de novo pathway; 5-amino-1-(5-phospho-D-ribosyl)imidazole from N(2)-formyl-N(1)-(5-phospho-D-ribosyl)glycinamide: step 2/2. This chain is Phosphoribosylformylglycinamidine cyclo-ligase, found in Streptococcus mutans serotype c (strain ATCC 700610 / UA159).